A 450-amino-acid polypeptide reads, in one-letter code: Phosphoglucosamine mutase (450 aa).

S101 functions as the Phosphoserine intermediate in the catalytic mechanism. Residues S101, D240, D242, and D244 each coordinate Mg(2+). S101 carries the phosphoserine modification.

It belongs to the phosphohexose mutase family. The cofactor is Mg(2+). In terms of processing, activated by phosphorylation.

It catalyses the reaction alpha-D-glucosamine 1-phosphate = D-glucosamine 6-phosphate. Functionally, catalyzes the conversion of glucosamine-6-phosphate to glucosamine-1-phosphate. This is Phosphoglucosamine mutase from Streptococcus agalactiae serotype Ia (strain ATCC 27591 / A909 / CDC SS700).